The chain runs to 422 residues: Probable zinc-type alcohol dehydrogenase-like protein L498 (422 aa).

Zn(2+) is bound by residues C108, H129, C160, C163, C166, C174, and C231.

Requires Zn(2+) as cofactor.

The protein localises to the host cytoplasm. It localises to the virion. In Acanthamoeba polyphaga (Amoeba), this protein is Probable zinc-type alcohol dehydrogenase-like protein L498.